Consider the following 427-residue polypeptide: Flavohemoprotein (427 aa).

One can recognise a Globin domain in the interval 30–168 (ELNESQKQYI…LAKILIDSEK (139 aa)). Heme b is bound at residue His-114. Active-site charge relay system residues include Tyr-124 and Glu-167. Residues 176–427 (WNGFVEFKVT…QSEFFGPYIP (252 aa)) are reductase. An FAD-binding FR-type domain is found at 177 to 285 (NGFVEFKVTE…SPPAGNFVYK (109 aa)). Residues Tyr-216 and 232 to 235 (REYS) contribute to the FAD site. 301–306 (GIGITP) contacts NADP(+). 421 to 424 (FFGP) contributes to the FAD binding site.

The protein belongs to the globin family. Two-domain flavohemoproteins subfamily. It in the C-terminal section; belongs to the flavoprotein pyridine nucleotide cytochrome reductase family. FAD is required as a cofactor. Heme b serves as cofactor.

Its subcellular location is the cytoplasm. It is found in the nucleus. The enzyme catalyses 2 nitric oxide + NADPH + 2 O2 = 2 nitrate + NADP(+) + H(+). It carries out the reaction 2 nitric oxide + NADH + 2 O2 = 2 nitrate + NAD(+) + H(+). Is involved in NO detoxification in an aerobic process, termed nitric oxide dioxygenase (NOD) reaction that utilizes O(2) and NAD(P)H to convert NO to nitrate, which protects the fungus from various noxious nitrogen compounds. Therefore, plays a central role in the inducible response to nitrosative stress. In terms of biological role, in the presence of oxygen and NADH, it has NADH oxidase activity, which leads to the generation of superoxide and H(2)O(2). Under anaerobic conditions, it also exhibits nitric oxide reductase and FAD reductase activities. However, all these reactions are much lower than NOD activity. This is Flavohemoprotein from Schizosaccharomyces pombe (strain 972 / ATCC 24843) (Fission yeast).